Consider the following 544-residue polypeptide: Homeobox protein B-H1 (544 aa).

Over residues 53–70 the composition is skewed to low complexity; it reads STTTMSSGGSTTTASGIG. Disordered stretches follow at residues 53-73, 92-179, 236-308, and 471-544; these read STTTMSSGGSTTTASGIGKPN, YKQQ…PPTA, GGVG…AFTD, and AANP…QIQV. Residues 95–105 are compositionally biased toward basic residues; that stretch reads QQHHQQLHHHN. A compositionally biased stretch (low complexity) spans 106 to 131; sequence NNNNSGSSGGSSPAHSNNNNNINGDN. Residues 156–172 show a composition bias toward basic residues; the sequence is THPHTHPHALMHPHGKL. Residues 247–262 show a composition bias toward acidic residues; it reads DLDDSSDYHEENEDCD. Residues 266-282 show a composition bias toward basic and acidic residues; the sequence is MDDHSVCSNGGKDDDGN. The span at 283–293 shows a compositional bias: polar residues; the sequence is SVKSGSTSDMS. Positions 299 to 358 form a DNA-binding region, homeobox; it reads QRKARTAFTDHQLQTLEKSFERQKYLSVQERQELAHKLDLSDCQVKTWYQNRRTKWKRQT. The span at 476 to 485 shows a compositional bias: pro residues; that stretch reads GPHPVAPPPS. The segment covering 492–506 has biased composition (low complexity); it reads PSGLVKPIPAHSASA. The span at 507–516 shows a compositional bias: pro residues; that stretch reads SPPPRPPSTP.

Belongs to the Antp homeobox family. In terms of tissue distribution, B-H1 and B-H2 are abundant in the eye-antenna imaginal disk. Expressed in R1 and R6 cells throughout larval stage until 30 hours after puparium formation, at which time expression is seen in the anterior and posterior primary pigment cells. Coexpressed in embryonic glial cells, neurons of the CNS and PNS, most latitudinal anterior cells of the developing notum and the central circular region of the leg and antennal imaginal disk throughout larval development.

The protein localises to the nucleus. In terms of biological role, B-H1 and B-H2 are regulated by members of the wg signaling pathway; wg and dpp. B-H1 and B-H2 are coexpressed and functionally required in R1 and R6 receptor cells and primary pigment cells for normal eye development. Coexpression is also required for the fate determination of external sensory organs, formation of notal microchaetae, formation of presutural macrochaetae, antennal development and for distal leg morphogenesis; segmentation and specification of tarsal segments 3-5. The polypeptide is Homeobox protein B-H1 (B-H1) (Drosophila melanogaster (Fruit fly)).